The sequence spans 186 residues: Lipid A palmitoyltransferase PagP (186 aa).

The signal sequence occupies residues M1–A25. Catalysis depends on residues H58, D101, and S102.

Belongs to the lipid A palmitoyltransferase family. In terms of assembly, homodimer.

The protein localises to the cell outer membrane. The enzyme catalyses lipid A (E. coli) + a 1-hexadecanoyl-2-acyl-sn-glycero-3-phosphocholine = hepta-acyl lipid A (E. coli) + a 2-acyl-sn-glycero-3-phosphocholine. The catalysed reaction is lipid IIA + a 1-hexadecanoyl-2-acyl-sn-glycero-3-phosphocholine = lipid IIB + a 2-acyl-sn-glycero-3-phosphocholine. It catalyses the reaction lipid IVA (E. coli) + a 1-hexadecanoyl-2-acyl-sn-glycero-3-phosphocholine = lipid IVB (E. coli) + a 2-acyl-sn-glycero-3-phosphocholine. Functionally, transfers a palmitate residue from the sn-1 position of a phospholipid to the N-linked hydroxymyristate on the proximal unit of lipid A or its precursors. The protein is Lipid A palmitoyltransferase PagP of Escherichia coli (strain ATCC 55124 / KO11FL).